The chain runs to 428 residues: Homocitrate synthase, cytosolic isozyme (428 aa).

Positions 23-276 constitute a Pyruvate carboxyltransferase domain; the sequence is FQLIDSTLRE…KSKYKLHKIR (254 aa). Arg31 lines the 2-oxoglutarate pocket. Glu32 is a Mg(2+) binding site. Residues His91, Arg151, and Thr185 each contribute to the 2-oxoglutarate site. Mg(2+) is bound by residues His212 and His214. The Proton acceptor role is filled by His309. The residue at position 385 (Ser385) is a Phosphoserine. Residue Thr396 is modified to Phosphothreonine. A disordered region spans residues 399 to 428; the sequence is VLSAKKNKKNDSDVPELATIPAAKRTKPSA. Ser401 and Ser410 each carry phosphoserine.

Belongs to the alpha-IPM synthase/homocitrate synthase family. Homocitrate synthase LYS20/LYS21 subfamily. The cofactor is Mg(2+). Mn(2+) serves as cofactor.

The protein localises to the cytoplasm. It carries out the reaction acetyl-CoA + 2-oxoglutarate + H2O = (2R)-homocitrate + CoA + H(+). It participates in amino-acid biosynthesis; L-lysine biosynthesis via AAA pathway; L-alpha-aminoadipate from 2-oxoglutarate: step 1/5. Its function is as follows. Catalyzes the aldol-type condensation of 2-oxoglutarate with acetyl-CoA to yield homocitrate. Carries out the first step of the alpha-aminoadipate (AAA) lysine biosynthesis pathway. This Saccharomyces cerevisiae (strain ATCC 204508 / S288c) (Baker's yeast) protein is Homocitrate synthase, cytosolic isozyme (LYS20).